The primary structure comprises 245 residues: uncharacterized protein (245 aa).

Helical transmembrane passes span 10 to 30 (FYTL…SPWY), 94 to 114 (TLAF…YVHI), 134 to 154 (VLIG…FLII), and 196 to 216 (RGWI…IYCW).

Its subcellular location is the membrane. This is an uncharacterized protein from Dictyostelium discoideum (Social amoeba).